We begin with the raw amino-acid sequence, 347 residues long: Ribosomal RNA large subunit methyltransferase M (347 aa).

S-adenosyl-L-methionine is bound by residues Ser184, 217–220 (APGG), Asp236, Asp256, and Asp272. The active-site Proton acceptor is the Lys301.

It belongs to the class I-like SAM-binding methyltransferase superfamily. RNA methyltransferase RlmE family. RlmM subfamily. Monomer.

It localises to the cytoplasm. The catalysed reaction is cytidine(2498) in 23S rRNA + S-adenosyl-L-methionine = 2'-O-methylcytidine(2498) in 23S rRNA + S-adenosyl-L-homocysteine + H(+). In terms of biological role, catalyzes the 2'-O-methylation at nucleotide C2498 in 23S rRNA. This is Ribosomal RNA large subunit methyltransferase M from Xanthomonas axonopodis pv. citri (strain 306).